Consider the following 188-residue polypeptide: MASWLPETLFETVGQGPPPSKDYYQLLVTRSQVIFRWWKISLRSEYRSTKPGEAKETHEDFLENSHLQGQTALIFGARILDYVINLCKGKFDFLERLSDDLLLTIISYLDLEDIARLCQTSHRFAKLCMSDKLWEQIVQSTCDTITPDVRALAEDTGWRQLFFTNKLQLQRQLRKRKQKYGNLREKQP.

In terms of domain architecture, F-box spans 91–137 (FDFLERLSDDLLLTIISYLDLEDIARLCQTSHRFAKLCMSDKLWEQI).

In terms of assembly, directly interacts with SKP1 and CUL1.

Its function is as follows. Substrate-recognition component of the SCF (SKP1-CUL1-F-box protein)-type E3 ubiquitin ligase complex. The chain is F-box only protein 36 (FBXO36) from Homo sapiens (Human).